The chain runs to 422 residues: 3-phosphoshikimate 1-carboxyvinyltransferase (422 aa).

The 3-phosphoshikimate site is built by K21, S22, and R26. A phosphoenolpyruvate-binding site is contributed by K21. Phosphoenolpyruvate contacts are provided by G93 and R121. 3-phosphoshikimate contacts are provided by S166, S167, Q168, S194, D310, and K337. Residue Q168 participates in phosphoenolpyruvate binding. D310 acts as the Proton acceptor in catalysis. Phosphoenolpyruvate-binding residues include R341, R382, and K407.

The protein belongs to the EPSP synthase family. As to quaternary structure, monomer.

Its subcellular location is the cytoplasm. It carries out the reaction 3-phosphoshikimate + phosphoenolpyruvate = 5-O-(1-carboxyvinyl)-3-phosphoshikimate + phosphate. It participates in metabolic intermediate biosynthesis; chorismate biosynthesis. Its function is as follows. Catalyzes the transfer of the enolpyruvyl moiety of phosphoenolpyruvate (PEP) to the 5-hydroxyl of shikimate-3-phosphate (S3P) to produce enolpyruvyl shikimate-3-phosphate and inorganic phosphate. The protein is 3-phosphoshikimate 1-carboxyvinyltransferase of Methanoculleus marisnigri (strain ATCC 35101 / DSM 1498 / JR1).